A 512-amino-acid polypeptide reads, in one-letter code: Sucrose transport protein SUC2 (512 aa).

Residues 1–31 (MVSHPMEKAANGASALETQTGELDQPERLRK) lie on the Cytoplasmic side of the membrane. Residues 32-52 (IISVSSIAAGVQFGWALQLSL) traverse the membrane as a helical segment. Residues 53 to 65 (LTPYVQLLGIPHK) are Extracellular-facing. Residues 66–86 (WASLIWLCGPISGMLVQPIVG) form a helical membrane-spanning segment. Residues 87 to 100 (YHSDRCTSRFGRRR) lie on the Cytoplasmic side of the membrane. A helical transmembrane segment spans residues 101 to 121 (PFIVAGAGLVTVAVFLIGYAA). Topologically, residues 122-138 (DIGHSMGDQLDKPPKTR) are extracellular. Residues 139–159 (AIAIFALGFWILDVANNTLQG) form a helical membrane-spanning segment. Residues 160-177 (PCRAFLADLSAGNAKKTR) lie on the Cytoplasmic side of the membrane. Residues 178 to 198 (TANAFFSFFMAVGNVLGYAAG) form a helical membrane-spanning segment. Over 199-223 (SYRNLYKVVPFTMTESCDLYCANLK) the chain is Extracellular. The helical transmembrane segment at 224 to 244 (TCFFLSITLLLIVTFVSLCYV) threads the bilayer. The Cytoplasmic segment spans residues 245–278 (KEKPWTPEPTADGKASNVPFFGEIFGAFKELKRP). A helical transmembrane segment spans residues 279–299 (MWMLLIVTALNWIAWFPFLLF). Topologically, residues 300–332 (DTDWMGREVYGGNSDATATAASKKLYNDGVRAG) are extracellular. Residues 333–353 (ALGLMLNAIVLGFMSLGVEWI) traverse the membrane as a helical segment. Residues 354 to 362 (GRKLGGAKR) are Cytoplasmic-facing. Residues 363–383 (LWGIVNFILAICLAMTVVVTK) traverse the membrane as a helical segment. Topologically, residues 384–407 (QAENHRRDHGGAKTGPPGNVTAGA) are extracellular. Asn-402 carries an N-linked (GlcNAc...) asparagine glycan. A helical membrane pass occupies residues 408 to 428 (LTLFAILGIPQAITFSIPFAL). The Cytoplasmic portion of the chain corresponds to 429–440 (ASIFSTNSGAGQ). Residues 441–461 (GLSLGVLNLAIVVPQMVISVG) traverse the membrane as a helical segment. Residues 462–473 (GGPFDELFGGGN) lie on the Extracellular side of the membrane. A helical membrane pass occupies residues 474–494 (IPAFVLGAIAAAVSGVLALTV). Residues 495–512 (LPSPPPDAPAFKATMGFH) lie on the Cytoplasmic side of the membrane.

Belongs to the glycoside-pentoside-hexuronide (GPH) cation symporter transporter (TC 2.A.2.4) family. Homodimer. Interacts with SUC3 and SUC4. In terms of tissue distribution, expressed in leaves and, to a lower extent, in roots, flowers and stems. Highly specific to the phloem, exclusively localized in companion cells (at protein level).

It is found in the cell membrane. The enzyme catalyses sucrose(out) + H(+)(out) = sucrose(in) + H(+)(in). Its pathway is glycan biosynthesis; sucrose metabolism. Inhibited by protonophores (e.g. dinitrophenol and carbonyl cyanide m-chlorophenyl-hydrazone (CCCP)) and SH group inhibitors (e.g. N-ethylmaleimide (NEM) and p-chloromercuriphenyl sulphonic acid (PCMPS)). Its function is as follows. Responsible for the transport of sucrose into the cell, with the concomitant uptake of protons (symport system). Can also transport other glucosides such as maltose, arbutin (hydroquinone-beta-D-glucoside), salicin (2-(hydroxymethyl)phenyl-beta-D-glucoside), alpha-phenylglucoside, beta-phenylglucoside, alpha-paranitrophenylglucoside, beta-paranitrophenylglucoside, and paranitrophenyl-beta-thioglucoside. May also transport biotin. Required for apoplastic phloem sucrose loading in source tissues (e.g. leaves) in order to transport it to sink tissues (e.g. roots, flowers). This is Sucrose transport protein SUC2 from Arabidopsis thaliana (Mouse-ear cress).